A 561-amino-acid polypeptide reads, in one-letter code: Putative periplasmic trehalase (561 aa).

An N-terminal signal peptide occupies residues 1–30 (MKSPAPSRPQKMALIPACIFLCFAALSVQA). Residues arginine 148, 155-156 (WD), asparagine 192, 201-203 (RSQ), 273-275 (RPE), and glycine 306 each bind substrate. Catalysis depends on proton donor/acceptor residues aspartate 308 and glutamate 492. Residue glutamate 507 coordinates substrate. Residues 535 to 561 (CDNVPATRPLSESTTQPVKQKEAEPTP) form a disordered region.

It belongs to the glycosyl hydrolase 37 family. As to quaternary structure, monomer.

It localises to the periplasm. The enzyme catalyses alpha,alpha-trehalose + H2O = alpha-D-glucose + beta-D-glucose. In terms of biological role, provides the cells with the ability to utilize trehalose at high osmolarity by splitting it into glucose molecules that can subsequently be taken up by the phosphotransferase-mediated uptake system. This chain is Putative periplasmic trehalase, found in Escherichia coli O157:H7.